A 280-amino-acid polypeptide reads, in one-letter code: Ribosomal RNA-processing protein 7 homolog A (280 aa).

The region spanning 59–159 is the RRM domain; sequence RTLFVLNVPP…TGIHKWISDY (101 aa). S99 is modified (phosphoserine).

Belongs to the RRP7 family. In terms of assembly, part of the small subunit (SSU) processome, composed of more than 70 proteins and the RNA chaperone small nucleolar RNA (snoRNA) U3. Interacts with NOL6; required for NOL6 localization to nucleolus.

It localises to the nucleus. It is found in the nucleolus. The protein resides in the cell projection. The protein localises to the cilium. Its subcellular location is the cytoplasm. It localises to the cytoskeleton. It is found in the microtubule organizing center. The protein resides in the centrosome. Functionally, nucleolar protein that is involved in ribosomal RNA (rRNA) processing. Also plays a role in primary cilia resorption, and cell cycle progression in neurogenesis and neocortex development. Part of the small subunit (SSU) processome, first precursor of the small eukaryotic ribosomal subunit. During the assembly of the SSU processome in the nucleolus, many ribosome biogenesis factors, an RNA chaperone and ribosomal proteins associate with the nascent pre-rRNA and work in concert to generate RNA folding, modifications, rearrangements and cleavage as well as targeted degradation of pre-ribosomal RNA by the RNA exosome. This is Ribosomal RNA-processing protein 7 homolog A (RRP7A) from Pongo abelii (Sumatran orangutan).